We begin with the raw amino-acid sequence, 428 residues long: Adenosylmethionine-8-amino-7-oxononanoate aminotransferase (428 aa).

Tryptophan 52 provides a ligand contact to substrate. 112-113 (GS) contributes to the pyridoxal 5'-phosphate binding site. Substrate is bound at residue tyrosine 144. Aspartate 245 is a pyridoxal 5'-phosphate binding site. Residues lysine 274 and glycine 307 each contribute to the substrate site. Residue lysine 274 is modified to N6-(pyridoxal phosphate)lysine. 308–309 (PT) lines the pyridoxal 5'-phosphate pocket. Residue arginine 391 coordinates substrate.

This sequence belongs to the class-III pyridoxal-phosphate-dependent aminotransferase family. BioA subfamily. Homodimer. Pyridoxal 5'-phosphate serves as cofactor.

It localises to the cytoplasm. The enzyme catalyses (8S)-8-amino-7-oxononanoate + S-adenosyl-L-methionine = S-adenosyl-4-methylsulfanyl-2-oxobutanoate + (7R,8S)-7,8-diammoniononanoate. It functions in the pathway cofactor biosynthesis; biotin biosynthesis; 7,8-diaminononanoate from 8-amino-7-oxononanoate (SAM route): step 1/1. Functionally, catalyzes the transfer of the alpha-amino group from S-adenosyl-L-methionine (SAM) to 7-keto-8-aminopelargonic acid (KAPA) to form 7,8-diaminopelargonic acid (DAPA). It is the only aminotransferase known to utilize SAM as an amino donor. This chain is Adenosylmethionine-8-amino-7-oxononanoate aminotransferase, found in Buchnera aphidicola subsp. Acyrthosiphon pisum (strain APS) (Acyrthosiphon pisum symbiotic bacterium).